The sequence spans 320 residues: Apolipoprotein E (320 aa).

Residues 1–18 (MKVLWAALLVAFLAGCQG) form the signal peptide. A run of 8 repeats spans residues 82–103 (ALMD…EQLS), 104–125 (PVAE…ARLG), 126–147 (ADME…AMLG), 148–169 (QSTE…KRLL), 170–191 (RDVD…EGAE), 192–213 (RGVS…ARAA), 214–236 (TVGS…ERLR), and 237–258 (ARME…EQVE). The tract at residues 82–258 (ALMDETMKEL…RLDEVKEQVE (177 aa)) is 8 X 22 AA approximate tandem repeats. Methionine 145 carries the methionine sulfoxide modification. The residue at position 149 (serine 149) is a Phosphoserine. Residues 160-170 (HLRKLRKRLLR) form an LDL and other lipoprotein receptors binding region. 164-167 (LRKR) is a binding site for heparin. The tract at residues 212–293 (AATVGSSLAG…SWFEPLVEDM (82 aa)) is lipid-binding and lipoprotein association. 232-239 (GERLRARM) provides a ligand contact to heparin. Residues 269 to 320 (QQMRLQAEAFQARLKSWFEPLVEDMQRQWAGLVEKVQAAVGASAAPVPSDNH) form a homooligomerization region. The segment at 281–293 (RLKSWFEPLVEDM) is specificity for association with VLDL.

The protein belongs to the apolipoprotein A1/A4/E family. Homotetramer. May interact with ABCA1; functionally associated with ABCA1 in the biogenesis of HDLs. May interact with APP/A4 amyloid-beta peptide; the interaction is extremely stable in vitro but its physiological significance is unclear. May interact with MAPT. May interact with MAP2. In the cerebrospinal fluid, interacts with secreted SORL1. Interacts with PMEL; this allows the loading of PMEL luminal fragment on ILVs to induce fibril nucleation. In terms of processing, APOE exists as multiple glycosylated and sialylated glycoforms within cells and in plasma. The extent of glycosylation and sialylation are tissue and context specific. Post-translationally, glycated in plasma VLDL. Phosphorylated by FAM20C in the extracellular medium.

Its subcellular location is the secreted. The protein localises to the extracellular space. It localises to the extracellular matrix. The protein resides in the extracellular vesicle. It is found in the endosome. Its subcellular location is the multivesicular body. Functionally, APOE is an apolipoprotein, a protein associating with lipid particles, that mainly functions in lipoprotein-mediated lipid transport between organs via the plasma and interstitial fluids. APOE is a core component of plasma lipoproteins and is involved in their production, conversion and clearance. Apolipoproteins are amphipathic molecules that interact both with lipids of the lipoprotein particle core and the aqueous environment of the plasma. As such, APOE associates with chylomicrons, chylomicron remnants, very low density lipoproteins (VLDL) and intermediate density lipoproteins (IDL) but shows a preferential binding to high-density lipoproteins (HDL). It also binds a wide range of cellular receptors including the LDL receptor/LDLR, the LDL receptor-related proteins LRP1, LRP2 and LRP8 and the very low-density lipoprotein receptor/VLDLR that mediate the cellular uptake of the APOE-containing lipoprotein particles. Finally, APOE also has a heparin-binding activity and binds heparan-sulfate proteoglycans on the surface of cells, a property that supports the capture and the receptor-mediated uptake of APOE-containing lipoproteins by cells. A main function of APOE is to mediate lipoprotein clearance through the uptake of chylomicrons, VLDLs, and HDLs by hepatocytes. APOE is also involved in the biosynthesis by the liver of VLDLs as well as their uptake by peripheral tissues ensuring the delivery of triglycerides and energy storage in muscle, heart and adipose tissues. By participating in the lipoprotein-mediated distribution of lipids among tissues, APOE plays a critical role in plasma and tissues lipid homeostasis. APOE is also involved in two steps of reverse cholesterol transport, the HDLs-mediated transport of cholesterol from peripheral tissues to the liver, and thereby plays an important role in cholesterol homeostasis. First, it is functionally associated with ABCA1 in the biogenesis of HDLs in tissues. Second, it is enriched in circulating HDLs and mediates their uptake by hepatocytes. APOE also plays an important role in lipid transport in the central nervous system, regulating neuron survival and sprouting. The polypeptide is Apolipoprotein E (APOE) (Plecturocebus moloch (Dusky titi monkey)).